The chain runs to 209 residues: 3-hexulose-6-phosphate synthase (209 aa).

Belongs to the HPS/KGPDC family. HPS subfamily. As to quaternary structure, homodimer.

It carries out the reaction D-ribulose 5-phosphate + formaldehyde = D-arabino-hex-3-ulose 6-phosphate. Its pathway is one-carbon metabolism; formaldehyde assimilation via RuMP pathway; D-fructose 6-phosphate from D-ribulose 5-phosphate and formaldehyde: step 1/2. Catalyzes the condensation of ribulose 5-phosphate with formaldehyde to form 3-hexulose 6-phosphate. The sequence is that of 3-hexulose-6-phosphate synthase (rmpA) from Methylomonas aminofaciens.